The chain runs to 1378 residues: Macrophage-stimulating protein receptor (1378 aa).

Residues 1 to 23 (MGLPLPLLQSSLLLMLLLRLSAA) form the signal peptide. Over 25–960 (TNLNWQCPRI…RSSPGRASQR (936 aa)) the chain is Extracellular. The Sema domain maps to 33-524 (RIPYAASRDF…SGDQVFKVPI (492 aa)). N-linked (GlcNAc...) asparagine glycosylation occurs at N91. 7 disulfide bridges follow: C102-C105, C108-C163, C136-C144, C175-C178, C301-C368, C386-C409, and C387-C424. N391, N460, and N490 each carry an N-linked (GlcNAc...) asparagine glycan. 4 disulfides stabilise this stretch: C529/C547, C535/C569, C538/C554, and C550/C560. 3 consecutive IPT/TIG domains span residues 571–673 (PEIS…FRVE), 686–769 (PVLT…FHYK), and 772–864 (PIVL…FRFL). Residues N656, N722, N845, and N901 are each glycosylated (N-linked (GlcNAc...) asparagine). Residues 961–981 (ILLIALLVLILLVAVLAVALI) traverse the membrane as a helical segment. Residues 982–1378 (FNSRRRKKQL…RPLSEPPLPT (397 aa)) lie on the Cytoplasmic side of the membrane. The interval 1002 to 1026 (SDINDTASGAPNHEESSESRDGTSV) is disordered. A compositionally biased stretch (basic and acidic residues) spans 1013–1022 (NHEESSESRD). Residues 1059 to 1322 (IHTDQVIGKG…ALVLEVKQVV (264 aa)) form the Protein kinase domain. Residues 1065–1073 (IGKGHFGVV), K1091, and 1138–1141 (LPYM) contribute to the ATP site. D1185 functions as the Proton acceptor in the catalytic mechanism. Residue R1189 participates in ATP binding. 4 positions are modified to phosphotyrosine; by autocatalysis: Y1215, Y1216, Y1330, and Y1337. Positions 1347 to 1378 (DGSVPPEQVQPSPQHCRSTSKPRPLSEPPLPT) are disordered. Positions 1349–1360 (SVPPEQVQPSPQ) are enriched in low complexity.

The protein belongs to the protein kinase superfamily. Tyr protein kinase family. Heterodimer of an alpha chain and a beta chain which are disulfide linked. Binds PLXNB1. Associates with and is negatively regulated by HYAL2. Interacts when phosphorylated with downstream effectors including PIK3R1, PCLG1, GRB2 and GAB1. Interacts with integrin beta1/ITGB1 in a ligand-independent fashion. Isoform sf-Stk forms covalent heterodimers with friend spleen focus-forming virus (FSFFV) gp55. Post-translationally, proteolytic processing yields the two subunits. Autophosphorylated in response to ligand binding on Tyr-1215 and Tyr-1216 in the kinase domain leading to further phosphorylation of Tyr-1330 and Tyr-1337 in the C-terminal multifunctional docking site. In terms of processing, ubiquitinated. Ubiquitination by CBL regulates the receptor stability and activity through proteasomal degradation. Post-translationally, O-mannosylation of IPT/TIG domains on Thr or Ser residues by TMEM260 is required for protein maturation. O-mannosylated residues are composed of single mannose glycans that are not elongated or modified. In terms of tissue distribution, expressed in liver, skin, lung, brain, testis and kidney.

The protein localises to the membrane. The catalysed reaction is L-tyrosyl-[protein] + ATP = O-phospho-L-tyrosyl-[protein] + ADP + H(+). With respect to regulation, in its inactive state, the C-terminal tail interacts with the catalytic domain and inhibits the kinase activity. Upon ligand binding, the C-terminal tail is displaced and becomes phosphorylated, thus increasing the kinase activity. Functionally, receptor tyrosine kinase that transduces signals from the extracellular matrix into the cytoplasm by binding to MST1 ligand. Regulates many physiological processes including cell survival, migration and differentiation. Ligand binding at the cell surface induces autophosphorylation of RON on its intracellular domain that provides docking sites for downstream signaling molecules. Following activation by ligand, interacts with the PI3-kinase subunit PIK3R1, PLCG1 or the adapter GAB1. Recruitment of these downstream effectors by RON leads to the activation of several signaling cascades including the RAS-ERK, PI3 kinase-AKT, or PLCgamma-PKC. RON signaling activates the wound healing response by promoting epithelial cell migration, proliferation as well as survival at the wound site. Also plays a role in the innate immune response by regulating the migration and phagocytic activity of macrophages. Alternatively, RON can also promote signals such as cell migration and proliferation in response to growth factors other than MST1 ligand. In Mus musculus (Mouse), this protein is Macrophage-stimulating protein receptor (Mst1r).